The following is a 369-amino-acid chain: Erythronate-4-phosphate dehydrogenase (369 aa).

Substrate-binding residues include Ser45 and Thr66. Asp146 is a binding site for NAD(+). Arg209 is a catalytic residue. Asp233 lines the NAD(+) pocket. Glu238 is a catalytic residue. His255 functions as the Proton donor in the catalytic mechanism. NAD(+) is bound at residue Gly258.

This sequence belongs to the D-isomer specific 2-hydroxyacid dehydrogenase family. PdxB subfamily. Homodimer.

It is found in the cytoplasm. The catalysed reaction is 4-phospho-D-erythronate + NAD(+) = (R)-3-hydroxy-2-oxo-4-phosphooxybutanoate + NADH + H(+). It functions in the pathway cofactor biosynthesis; pyridoxine 5'-phosphate biosynthesis; pyridoxine 5'-phosphate from D-erythrose 4-phosphate: step 2/5. Catalyzes the oxidation of erythronate-4-phosphate to 3-hydroxy-2-oxo-4-phosphonooxybutanoate. This Porphyromonas gingivalis (strain ATCC BAA-308 / W83) protein is Erythronate-4-phosphate dehydrogenase.